We begin with the raw amino-acid sequence, 549 residues long: Glucose-6-phosphate isomerase (549 aa).

The Proton donor role is filled by Glu355. Active-site residues include His387 and Lys515.

The protein belongs to the GPI family.

It is found in the cytoplasm. The enzyme catalyses alpha-D-glucose 6-phosphate = beta-D-fructose 6-phosphate. The protein operates within carbohydrate biosynthesis; gluconeogenesis. It participates in carbohydrate degradation; glycolysis; D-glyceraldehyde 3-phosphate and glycerone phosphate from D-glucose: step 2/4. Functionally, catalyzes the reversible isomerization of glucose-6-phosphate to fructose-6-phosphate. The chain is Glucose-6-phosphate isomerase from Mannheimia succiniciproducens (strain KCTC 0769BP / MBEL55E).